Here is a 481-residue protein sequence, read N- to C-terminus: GTPase Der (481 aa).

EngA-type G domains follow at residues 47–210 and 221–394; these read PVLA…PDVS and RRVA…ESWE. GTP-binding positions include 53 to 60, 100 to 104, 162 to 165, 227 to 234, 274 to 278, and 339 to 342; these read GRPNVGKS, DTGGW, NKVD, DTAGI, and NKWD. Residues 395 to 477 form the KH-like domain; that stretch reads TRIPTGKFNA…PIVLNMRVRE (83 aa).

The protein belongs to the TRAFAC class TrmE-Era-EngA-EngB-Septin-like GTPase superfamily. EngA (Der) GTPase family. As to quaternary structure, associates with the 50S ribosomal subunit.

Functionally, GTPase that plays an essential role in the late steps of ribosome biogenesis. In Leifsonia xyli subsp. xyli (strain CTCB07), this protein is GTPase Der.